The sequence spans 285 residues: ATP phosphoribosyltransferase (285 aa).

It belongs to the ATP phosphoribosyltransferase family. Long subfamily. Mg(2+) is required as a cofactor.

It localises to the cytoplasm. The enzyme catalyses 1-(5-phospho-beta-D-ribosyl)-ATP + diphosphate = 5-phospho-alpha-D-ribose 1-diphosphate + ATP. Its pathway is amino-acid biosynthesis; L-histidine biosynthesis; L-histidine from 5-phospho-alpha-D-ribose 1-diphosphate: step 1/9. Its activity is regulated as follows. Feedback inhibited by histidine. Functionally, catalyzes the condensation of ATP and 5-phosphoribose 1-diphosphate to form N'-(5'-phosphoribosyl)-ATP (PR-ATP). Has a crucial role in the pathway because the rate of histidine biosynthesis seems to be controlled primarily by regulation of HisG enzymatic activity. This Sulfurisphaera tokodaii (strain DSM 16993 / JCM 10545 / NBRC 100140 / 7) (Sulfolobus tokodaii) protein is ATP phosphoribosyltransferase.